A 500-amino-acid chain; its full sequence is Melanopsin-like (500 aa).

Residues 1 to 65 (MSHHSSWRGH…TVDVPDHAHY (65 aa)) lie on the Extracellular side of the membrane. An N-linked (GlcNAc...) asparagine glycan is attached at N18. The helical transmembrane segment at 66–86 (IIGSVILIVGITGVIGNALVV) threads the bilayer. Residues 87–101 (YVFCRSRTLRTAGNM) lie on the Cytoplasmic side of the membrane. A helical transmembrane segment spans residues 102–122 (FIVNLAVADFLMSVTQSPVFF). The Extracellular segment spans residues 123 to 138 (AASLHRRWVFGERPCE). A disulfide bridge links C137 with C215. The helical transmembrane segment at 139-159 (LYAFCGALFGICSMMTLTAIA) threads the bilayer. Residues 160–182 (ADRCLAITQPLALVSRVSRRKAG) lie on the Cytoplasmic side of the membrane. Residues 183-203 (AVLVVVWLYSLGWSLPPFFGW) form a helical membrane-spanning segment. Over 204-232 (SAYVPEGLQTSCSWDYMTFTPSVRAYTIL) the chain is Extracellular. A helical transmembrane segment spans residues 233-253 (LFVFVFFIPLGIIGSCYFAIF). Residues 254 to 286 (QTIRAAGKEIRELDCGETHKVYERMQNEWKMAK) lie on the Cytoplasmic side of the membrane. A helical transmembrane segment spans residues 287–307 (VALVVIVLFIISWSPYSVVAL). Residues 308–322 (TATAGYSHFLTPYMN) lie on the Extracellular side of the membrane. A helical membrane pass occupies residues 323 to 343 (SVPAVIAKASAIHNPIIYAIT). K330 carries the post-translational modification N6-(retinylidene)lysine. The Cytoplasmic portion of the chain corresponds to 344–500 (HPKYRVAIAR…SDGKALLGGN (157 aa)). The segment at 404–428 (RWGKTRLSSASDSDSCWTESEADGS) is disordered. Positions 409 to 428 (RLSSASDSDSCWTESEADGS) are enriched in polar residues.

Belongs to the G-protein coupled receptor 1 family. Opsin subfamily. In terms of tissue distribution, expressed in a subset of retinal horizontal cells.

Its subcellular location is the cell membrane. Photoreceptor implicated in non-image-forming responses to light. The polypeptide is Melanopsin-like (opn4l) (Danio rerio (Zebrafish)).